Reading from the N-terminus, the 215-residue chain is WAT1-related protein At3g28060 (215 aa).

Transmembrane regions (helical) follow at residues 48–68, 82–102, 117–137, 146–166, and 176–196; these read IIIG…AVAY, FALA…VSLF, IMLI…VVES, VFLA…GAIF, and VIGG…FHIA. The region spanning 65-186 is the EamA domain; it reads AVAYIVQTHI…IGGTLISIGF (122 aa).

Belongs to the drug/metabolite transporter (DMT) superfamily. Plant drug/metabolite exporter (P-DME) (TC 2.A.7.4) family.

It is found in the membrane. The polypeptide is WAT1-related protein At3g28060 (Arabidopsis thaliana (Mouse-ear cress)).